A 223-amino-acid chain; its full sequence is MNIFVTGTNTDIGKTYVTKYLYKALRTRGYRVCIFKPFQTEEIGGGRYPDLEIYKNECDLDYDVTSLYTFKDPVSPHLAFKIERHQQLNHQTMIDKLESLKAQFDMILIEGAGGIAVPIYEYSDHFYMTTDLIKDTSDFIVSVLPSKLGAINDAIVHQKYIDHQELPPNVLIMNNYTDSAIEQDNLHTIEKLIHKSVYTLGHQATQESFSEAFIQRIIGGSNG.

Residue Asp11–Tyr16 participates in ATP binding. Thr15 contributes to the Mg(2+) binding site. Lys36 is an active-site residue. Thr40 is a substrate binding site. ATP is bound by residues Asp50, Glu110–Gly113, and Asn174–Asn175. Residues Asp50 and Glu110 each contribute to the Mg(2+) site.

This sequence belongs to the dethiobiotin synthetase family. Homodimer. The cofactor is Mg(2+).

The protein localises to the cytoplasm. It catalyses the reaction (7R,8S)-7,8-diammoniononanoate + CO2 + ATP = (4R,5S)-dethiobiotin + ADP + phosphate + 3 H(+). The protein operates within cofactor biosynthesis; biotin biosynthesis; biotin from 7,8-diaminononanoate: step 1/2. Catalyzes a mechanistically unusual reaction, the ATP-dependent insertion of CO2 between the N7 and N8 nitrogen atoms of 7,8-diaminopelargonic acid (DAPA, also called 7,8-diammoniononanoate) to form a ureido ring. The sequence is that of ATP-dependent dethiobiotin synthetase BioD from Staphylococcus epidermidis (strain ATCC 35984 / DSM 28319 / BCRC 17069 / CCUG 31568 / BM 3577 / RP62A).